Consider the following 370-residue polypeptide: tRNA-specific 2-thiouridylase MnmA (370 aa).

ATP contacts are provided by residues 24-31 and leucine 50; that span reads AMSGGVDS. The active-site Nucleophile is cysteine 119. A disulfide bond links cysteine 119 and cysteine 215. Glycine 143 is a binding site for ATP. Residues 165–167 are interaction with tRNA; that stretch reads KDQ. Cysteine 215 functions as the Cysteine persulfide intermediate in the catalytic mechanism.

This sequence belongs to the MnmA/TRMU family.

The protein localises to the cytoplasm. The enzyme catalyses S-sulfanyl-L-cysteinyl-[protein] + uridine(34) in tRNA + AH2 + ATP = 2-thiouridine(34) in tRNA + L-cysteinyl-[protein] + A + AMP + diphosphate + H(+). Its function is as follows. Catalyzes the 2-thiolation of uridine at the wobble position (U34) of tRNA, leading to the formation of s(2)U34. The chain is tRNA-specific 2-thiouridylase MnmA from Wolbachia pipientis wMel.